Consider the following 208-residue polypeptide: Inosine triphosphate pyrophosphatase (208 aa).

Ala2 carries the post-translational modification N-acetylalanine. Residue 14-19 (TGNAKK) participates in ITP binding. Glu44 contributes to the Mg(2+) binding site. Residues Lys56, 72-73 (DT), Lys89, 149-152 (FGWD), Lys172, and 177-178 (HR) contribute to the ITP site.

The protein belongs to the HAM1 NTPase family. Homodimer. The cofactor is Mg(2+). Mn(2+) serves as cofactor.

It is found in the cytoplasm. The enzyme catalyses ITP + H2O = IMP + diphosphate + H(+). It catalyses the reaction dITP + H2O = dIMP + diphosphate + H(+). It carries out the reaction XTP + H2O = XMP + diphosphate + H(+). The catalysed reaction is N(6)-hydroxy-dATP + H2O = N(6)-hydroxy-dAMP + diphosphate + H(+). Pyrophosphatase that hydrolyzes the non-canonical purine nucleotides inosine triphosphate (ITP), deoxyinosine triphosphate (dITP) as well as 2'-deoxy-N-6-hydroxylaminopurine triphosphate (dHAPTP) and xanthosine 5'-triphosphate (XTP) to their respective monophosphate derivatives. The enzyme does not distinguish between the deoxy- and ribose forms. Probably excludes non-canonical purines from RNA and DNA precursor pools, thus preventing their incorporation into RNA and DNA and avoiding chromosomal lesions. This Bos taurus (Bovine) protein is Inosine triphosphate pyrophosphatase.